The chain runs to 365 residues: WAT1-related protein At1g01070 (365 aa).

Transmembrane regions (helical) follow at residues 14 to 34 (YSPVIVMVMSNVAMGSVNALV), 46 to 66 (VIGAYRMAISALILVPFAYVL), 83 to 103 (FVSGLLGASLMQFFFLLGLSY), 107 to 127 (TVSCALVSMLPAITFALALIF), 139 to 159 (AGMLKVIGTLICISGALFLTF), 189 to 209 (WLLGCLYLTIGTVLLSLWMLF), 221 to 241 (YSSTCLMSIFAAFQCALLSLY), 255 to 275 (FVITVIIYAGVVGQAMTTVAT), 285 to 305 (VFASAFFPLTLISATLFDFLI), and 310 to 330 (LYLGSVIGSLVTITGLYMFLW). Residues 27–157 (MGSVNALVKK…LICISGALFL (131 aa)) form the EamA 1 domain. An EamA 2 domain is found at 223 to 329 (STCLMSIFAA…VTITGLYMFL (107 aa)). Polar residues predominate over residues 340 to 356 (TALSSGMDNEAQYTTPN). The interval 340-365 (TALSSGMDNEAQYTTPNKDNDSKSPV) is disordered.

It belongs to the drug/metabolite transporter (DMT) superfamily. Plant drug/metabolite exporter (P-DME) (TC 2.A.7.4) family.

It is found in the membrane. The chain is WAT1-related protein At1g01070 from Arabidopsis thaliana (Mouse-ear cress).